Here is an 87-residue protein sequence, read N- to C-terminus: Scorpine-like peptide Tco 41.46-2 (87 aa).

The first 19 residues, 1-19 (MERKLALLLFLGMVTLASC), serve as a signal peptide directing secretion. The 35-residue stretch at 53-87 (QFGCPAYEGYCNNHCQDIERKDGECHGFKCKCAKD) folds into the BetaSPN-type CS-alpha/beta domain. Intrachain disulfides connect C56–C77, C63–C82, and C67–C84.

It belongs to the long chain scorpion toxin family. Class 1 subfamily. As to expression, expressed by the venom gland.

It localises to the secreted. Its function is as follows. May have antibacterial activity. In terms of biological role, inhibits voltage-gated potassium channel. Functionally, does not induce hemolytic activity, lactate dehydrogenase (LDH) release from mast cells, mast cell degranulation, and antimicrobial effects. In vivo, injection into mice causes moderate edema formation, but induces very weak or no change in nociceptive sensibility. It also reduces mice locomotion, suggesting an increase in anxiety, but causes no alteration in rearing (standing on hind limbs). The sequence is that of Scorpine-like peptide Tco 41.46-2 from Tityus costatus (Brazilian scorpion).